Reading from the N-terminus, the 471-residue chain is ATP synthase subunit beta (471 aa).

ATP is bound at residue 153–160 (GGAGVGKT).

It belongs to the ATPase alpha/beta chains family. As to quaternary structure, F-type ATPases have 2 components, CF(1) - the catalytic core - and CF(0) - the membrane proton channel. CF(1) has five subunits: alpha(3), beta(3), gamma(1), delta(1), epsilon(1). CF(0) has four main subunits: a(1), b(1), b'(1) and c(9-12).

Its subcellular location is the cell membrane. The catalysed reaction is ATP + H2O + 4 H(+)(in) = ADP + phosphate + 5 H(+)(out). Its function is as follows. Produces ATP from ADP in the presence of a proton gradient across the membrane. The catalytic sites are hosted primarily by the beta subunits. The sequence is that of ATP synthase subunit beta from Roseiflexus sp. (strain RS-1).